The chain runs to 128 residues: Fluoride-specific ion channel FluC (128 aa).

The next 4 helical transmembrane spans lie at 4-24, 39-59, 71-91, and 99-119; these read LLLA…RYLI, GTLI…EFSM, FLTT…YETI, and ITLG…FVVI. Positions 78 and 81 each coordinate Na(+).

Belongs to the fluoride channel Fluc/FEX (TC 1.A.43) family.

The protein resides in the cell membrane. The enzyme catalyses fluoride(in) = fluoride(out). Na(+) is not transported, but it plays an essential structural role and its presence is essential for fluoride channel function. In terms of biological role, fluoride-specific ion channel. Important for reducing fluoride concentration in the cell, thus reducing its toxicity. The protein is Fluoride-specific ion channel FluC of Clostridium perfringens (strain ATCC 13124 / DSM 756 / JCM 1290 / NCIMB 6125 / NCTC 8237 / Type A).